A 189-amino-acid polypeptide reads, in one-letter code: Notch ligand osm-11 (189 aa).

The signal sequence occupies residues 1-18 (MNFITVAALAIVMVLAQA).

As to quaternary structure, may interact with lin-12/Notch receptor. In terms of tissue distribution, expressed in coelomocytes (at protein level).

Its subcellular location is the apical cell membrane. In terms of biological role, probable secreted lin-12/Notch ligand or co-ligand involved in the mediation of Notch signaling. Involved in the lin-12/Notch pathway signaling of cell fate in vulval precursor cells (VPCs), acting redundantly with dsl-1 and lag-2. Required for normal octanol avoidance response, acting via both lin-12/Notch and glp-1/Notch signaling pathways in neurons, in concert with lag-2. Involved in regulation of sleep-like quiescence during the larval to adult transition, acting via Notch receptor activation and in parallel with EGF signaling. This chain is Notch ligand osm-11, found in Caenorhabditis elegans.